The primary structure comprises 185 residues: Peptidyl-tRNA hydrolase (185 aa).

Tyr14 is a binding site for tRNA. Catalysis depends on His19, which acts as the Proton acceptor. TRNA-binding residues include Tyr64, Asn66, and Asn112.

This sequence belongs to the PTH family. In terms of assembly, monomer.

Its subcellular location is the cytoplasm. The enzyme catalyses an N-acyl-L-alpha-aminoacyl-tRNA + H2O = an N-acyl-L-amino acid + a tRNA + H(+). Hydrolyzes ribosome-free peptidyl-tRNAs (with 1 or more amino acids incorporated), which drop off the ribosome during protein synthesis, or as a result of ribosome stalling. Its function is as follows. Catalyzes the release of premature peptidyl moieties from peptidyl-tRNA molecules trapped in stalled 50S ribosomal subunits, and thus maintains levels of free tRNAs and 50S ribosomes. The protein is Peptidyl-tRNA hydrolase of Lactobacillus delbrueckii subsp. bulgaricus (strain ATCC 11842 / DSM 20081 / BCRC 10696 / JCM 1002 / NBRC 13953 / NCIMB 11778 / NCTC 12712 / WDCM 00102 / Lb 14).